Consider the following 246-residue polypeptide: MNNNTTAPTYTLRGLQLIGWRDMQHALDYLFADGQLKQGTLVAINAEKMLTIEDNAEVRELINAAEFKYADGISVVRSVRKKYPQAQVSRVAGADLWEELMARAGKEGTPVFLVGGKPEVLAQTEAKLRNQWNVNIVGSQDGYFKPEQRQALFERIHASGAQIVTVAMGSPKQEIIMRDCRLVHPDALYMGVGGTYDVFTGHVKRAPKIWQTLGLEWLYRLLSQPSRIKRQLRLLRYLRWHYTGNL.

The protein belongs to the glycosyltransferase 26 family.

It carries out the reaction UDP-N-acetyl-alpha-D-mannosaminouronate + N-acetyl-alpha-D-glucosaminyl-di-trans,octa-cis-undecaprenyl diphosphate = beta-D-ManNAcA-(1-&gt;4)-alpha-D-GlcNAc-di-trans,octa-cis-undecaprenyl diphosphate + UDP + H(+). It functions in the pathway bacterial outer membrane biogenesis; enterobacterial common antigen biosynthesis. Its function is as follows. Catalyzes the synthesis of Und-PP-GlcNAc-ManNAcA (Lipid II), the second lipid-linked intermediate involved in enterobacterial common antigen (ECA) synthesis. The sequence is that of UDP-N-acetyl-D-mannosaminuronic acid transferase from Escherichia coli (strain K12).